A 202-amino-acid polypeptide reads, in one-letter code: Transmembrane 4 L6 family member 4 (202 aa).

Residues 1–9 are Cytoplasmic-facing; that stretch reads MCTGGCARC. Residues 10 to 30 traverse the membrane as a helical segment; it reads LGGTLIPLAFFGFLANILLFF. The Extracellular portion of the chain corresponds to 31 to 45; the sequence is PGGKVIDDNDHLSQE. A helical transmembrane segment spans residues 46 to 66; it reads IWFFGGILGSGVLMIFPALVF. At 67 to 93 the chain is on the cytoplasmic side; that stretch reads LGLKNNDCCGCCGNEGCGKRFAMFTST. Residues 94–114 form a helical membrane-spanning segment; sequence IFAVVGFLGAGYSFIISAISI. The Extracellular segment spans residues 115–158; that stretch reads NKGPKCLMANSTWGYPFHDGDYLNDEALWNKCREPLNVVPWNLT. N-linked (GlcNAc...) asparagine glycosylation is found at N124 and N156. A helical membrane pass occupies residues 159–179; that stretch reads LFSILLVVGGIQMVLCAIQVV. At 180–202 the chain is on the cytoplasmic side; sequence NGLLGTLCGDCQCCGCCGGDGPV.

Belongs to the L6 tetraspanin family. Post-translationally, N-glycosylated. Glycosylation is required for the growth inhibitory effect. In terms of tissue distribution, jejunum and liver.

It localises to the membrane. Functionally, regulates the adhesive and proliferative status of intestinal epithelial cells. Can mediate density-dependent cell proliferation. The chain is Transmembrane 4 L6 family member 4 (TM4SF4) from Homo sapiens (Human).